The primary structure comprises 898 residues: Histone-lysine N-methyltransferase mes-4 (898 aa).

Residues 1-68 form a disordered region; it reads MLPSSGDSSK…APILTNAPKD (68 aa). Over residues 36–51 the composition is skewed to polar residues; sequence QRNATPQGAGSETSSN. 2 PHD-type zinc fingers span residues 126–214 and 303–355; these read DSKC…CNLD and IKAC…CVCG. The SET domain occupies 537–665; sequence EKIKLAATLC…DGDEITFSYN (129 aa). One can recognise a Post-SET domain in the interval 671–687; it reads NLPDCECGAENCMGTMG. Residues 689-847 form a disordered region; that stretch reads AKREKPEVAD…SLQTIQETGK (159 aa). Residues 692 to 704 show a composition bias toward basic and acidic residues; it reads EKPEVADSSEKAA. Basic residues predominate over residues 705–719; the sequence is KKNKSSKKKSVKNQN. 2 stretches are compositionally biased toward low complexity: residues 737 to 751 and 761 to 773; these read ISPSKPSTSSASSTS and SQNKKNLKKNSNQ. Residues 774–788 are compositionally biased toward polar residues; the sequence is PVADTGSTLSTSTEL. Positions 802–811 are enriched in low complexity; it reads SSRSRAASSS.

It belongs to the class V-like SAM-binding methyltransferase superfamily. Histone-lysine methyltransferase family. SET2 subfamily. In adults, it is predominantly expressed in the germline, and weakly expressed in intestinal cells.

It localises to the nucleus. It is found in the chromosome. It carries out the reaction L-lysyl(36)-[histone H3] + 2 S-adenosyl-L-methionine = N(6),N(6)-dimethyl-L-lysyl(36)-[histone H3] + 2 S-adenosyl-L-homocysteine + 2 H(+). Functionally, histone methyltransferase. Dimethylates 'Lys-36' of histone H3, a specific tag for epigenetic transcriptional activation. Plays a central role in early development and is responsible for all H3 'Lys-36' dimethylation until about the 40-cell stage. Indirectly involved in the global inactivation of the X chromosomes in germline cells, possibly by excluding the mes-2-mes-3-mes-6 repressive Polycomb complex from the autosomes. Not related to transcription elongation. Required for small-RNA-induced H3K27 trimethylation. May suppress sensitivity to RNAi. May regulate the expression of genes required for vulval development. The sequence is that of Histone-lysine N-methyltransferase mes-4 from Caenorhabditis elegans.